The following is an 842-amino-acid chain: Elongation factor 2 (842 aa).

A tr-type G domain is found at 17 to 253; that stretch reads TNVRNMSVIA…LWGDSYFNPK (237 aa). GTP contacts are provided by residues 26–33, 158–161, and 213–215; these read AHVDHGKS, NKVD, and SGL. A Diphthamide modification is found at histidine 699.

It belongs to the TRAFAC class translation factor GTPase superfamily. Classic translation factor GTPase family. EF-G/EF-2 subfamily.

The protein resides in the cytoplasm. It carries out the reaction GTP + H2O = GDP + phosphate + H(+). Its function is as follows. Catalyzes the GTP-dependent ribosomal translocation step during translation elongation. During this step, the ribosome changes from the pre-translocational (PRE) to the post-translocational (POST) state as the newly formed A-site-bound peptidyl-tRNA and P-site-bound deacylated tRNA move to the P and E sites, respectively. Catalyzes the coordinated movement of the two tRNA molecules, the mRNA and conformational changes in the ribosome. This is Elongation factor 2 (EFT1) from Kluyveromyces lactis (strain ATCC 8585 / CBS 2359 / DSM 70799 / NBRC 1267 / NRRL Y-1140 / WM37) (Yeast).